Reading from the N-terminus, the 612-residue chain is UvrABC system protein C (612 aa).

A GIY-YIG domain is found at 20–98 (THSGVYRMLD…IKQHRPKYNI (79 aa)). Positions 208-243 (SSVLEEISAKMYQASEDMEYEKAQVYRDQLVVLRKL) constitute a UVR domain.

It belongs to the UvrC family. As to quaternary structure, interacts with UvrB in an incision complex.

It localises to the cytoplasm. Functionally, the UvrABC repair system catalyzes the recognition and processing of DNA lesions. UvrC both incises the 5' and 3' sides of the lesion. The N-terminal half is responsible for the 3' incision and the C-terminal half is responsible for the 5' incision. The sequence is that of UvrABC system protein C from Francisella tularensis subsp. holarctica (strain FTNF002-00 / FTA).